Consider the following 86-residue polypeptide: Large ribosomal subunit protein uL23 (86 aa).

The protein belongs to the universal ribosomal protein uL23 family. In terms of assembly, part of the 50S ribosomal subunit. Contacts protein L29.

Binds to 23S rRNA. One of the proteins that surrounds the polypeptide exit tunnel on the outside of the ribosome. The polypeptide is Large ribosomal subunit protein uL23 (Pyrococcus horikoshii (strain ATCC 700860 / DSM 12428 / JCM 9974 / NBRC 100139 / OT-3)).